Reading from the N-terminus, the 2963-residue chain is tRNA nuclease CdiA (2963 aa).

Residues M1–A29 form the signal peptide. Positions A35–H320 are two-partner system transport domain (TPS). The segment at G573–N1074 is FHA-1. Residues R1075–D1342 are receptor binding domain (RBD). The tract at residues Y1343–Q1528 is YP domain. The interval G1529–N1751 is periplasmic FHA-1 repeat (pFR). Positions T1759–T1770 are enriched in basic and acidic residues. 2 disordered regions span residues T1759–S1787 and S1992–A2012. The FHA-2 stretch occupies residues Q1762–K2314. Over residues T1771–G1782 the composition is skewed to polar residues. A VEDN CT cleavage motif motif is present at residues V2694–N2697. A C-terminal effector domain (CT) region spans residues V2694–N2963.

The protein in the N-terminal section; belongs to the CdiA toxin family. In the C-terminal section; belongs to the bacterial EndoU family. As to quaternary structure, forms a 1:1 complex with cognate immunity protein CdiI.

It localises to the secreted. It is found in the target cell. Its subcellular location is the target cell cytoplasm. In terms of biological role, toxic component of a toxin-immunity protein module, which functions as a cellular contact-dependent growth inhibition (CDI) system. CDI modules allow bacteria to communicate with and inhibit the growth of closely related neighboring bacteria in a contact-dependent fashion. Targeting of the CT domain (residues 2824-2963) in the absence of immunity protein inhibits cell growth and causes tRNA(UUC-Glu) cleavage in the anticodon loop; expression of cognate immunity protein CdiI-43969 neutralizes growth inhibition and tRNA(UUC-Glu) remains intact, whereas non-cognate immunity proteins do not confer protection from the toxic effects. The CdiA protein is thought to be exported from the cell through the central lumen of CdiB, the other half of its two-partner system (TPS). The TPS domain probably remains associated with CdiB while the FHA-1 domain forms an extended filament with the receptor-binding domain (RBD) at its extremity; in the secretion arrested state the C-terminus of the RBD and YP domains form a hairpin-like structure as the FHA-2, PT and CT domains are periplasmic. The YP domain is probably responsible for this arrest at the point where it re-enters the host cell periplasm. Upon binding to a target cell outer membrane receptor a signal is transmitted to activate secretion. The filament elongates slightly, the rest of CdiA is secreted and the FHA-2 domain becomes stably associated with the target cell's outer membrane where it facilitates entry of the toxic CT domain into the target cell periplasm. From there the toxic CT domain is cleaved and gains access to the target cell cytoplasm via an inner membrane protein. This is tRNA nuclease CdiA from Yersinia mollaretii (strain ATCC 43969 / DSM 18520 / CIP 103324 / CNY 7263 / WAIP 204).